A 535-amino-acid polypeptide reads, in one-letter code: Cytochrome P450 71C3 (535 aa).

A helical transmembrane segment spans residues 23 to 43; that stretch reads QTLTLLLIAVPTVLLLLASLA. Cys-475 serves as a coordination point for heme.

It belongs to the cytochrome P450 family. The cofactor is heme.

The protein resides in the membrane. Its pathway is secondary metabolite biosynthesis; 2,4-dihydroxy-1,4-benzoxazin-3-one biosynthesis; 2,4-dihydroxy-1,4-benzoxazin-3-one from indoleglycerol phosphate: step 5/5. In terms of biological role, catalyzes the conversion of 2-hydroxy-1,4-benzoxazin-3-one (HBOA) to 2,4-dihydroxy-1,4-benzoxazin-3-one (DIBOA). The polypeptide is Cytochrome P450 71C3 (CYP71C3) (Zea mays (Maize)).